The chain runs to 131 residues: Arsenate reductase (131 aa).

Active-site nucleophile residues include cysteine 10, cysteine 82, and cysteine 89. 2 disulfides stabilise this stretch: cysteine 10–cysteine 82 and cysteine 82–cysteine 89.

This sequence belongs to the low molecular weight phosphotyrosine protein phosphatase family. Thioredoxin-coupled ArsC subfamily.

It localises to the cytoplasm. The enzyme catalyses arsenate + [thioredoxin]-dithiol + H(+) = arsenite + [thioredoxin]-disulfide + H2O. In terms of biological role, catalyzes the reduction of arsenate [As(V)] to arsenite [As(III)]. The sequence is that of Arsenate reductase from Staphylococcus aureus (strain COL).